The following is a 787-amino-acid chain: Protein smoothened (787 aa).

Residues 1–27 (MAAARPARGPELPLLGLLLLLLLGDPG) form the signal peptide. The Extracellular portion of the chain corresponds to 28 to 233 (RGAASSGNAT…EAEHQDMHSY (206 aa)). The tract at residues 30–60 (AASSGNATGPGPRSAGGSARRSAAVTGPPPP) is disordered. Asparagine 35 carries N-linked (GlcNAc...) asparagine glycosylation. The span at 38–53 (GPGPRSAGGSARRSAA) shows a compositional bias: low complexity. 5 disulfide bridges follow: cysteine 64/cysteine 178, cysteine 70/cysteine 134, cysteine 78/cysteine 127, cysteine 118/cysteine 154, and cysteine 147/cysteine 169. The FZ domain occupies 65–181 (GRAAPCEPLR…DRFPEGCTNE (117 aa)). Aspartate 95 provides a ligand contact to cholesterol. Asparagine 188 carries N-linked (GlcNAc...) asparagine glycosylation. Disulfide bonds link cysteine 193–cysteine 213 and cysteine 217–cysteine 295. A helical membrane pass occupies residues 234-254 (IAAFGAVTGLCTLFTLATFVA). The Cytoplasmic portion of the chain corresponds to 255–262 (DWRNSNRY). The helical transmembrane segment at 263 to 283 (PAVILFYVNACFFVGSIGWLA) threads the bilayer. Residues 284-314 (QFMDGARREIVCRADGTMRLGEPTSNETLSC) lie on the Extracellular side of the membrane. Asparagine 309 carries N-linked (GlcNAc...) asparagine glycosylation. Cysteines 314 and 390 form a disulfide. A helical membrane pass occupies residues 315 to 335 (VIIFVIVYYALMAGVVWFVVL). Topologically, residues 336 to 358 (TYAWHTSFKALGTTYQPLSGKTS) are cytoplasmic. The helical transmembrane segment at 359 to 379 (YFHLLTWSLPFVLTVAILAVA) threads the bilayer. Topologically, residues 380–402 (QVDGDSVSGICFVGYKNYRYRAG) are extracellular. Tyrosine 394 is a binding site for cholesterol. A helical membrane pass occupies residues 403–423 (FVLAPIGLVLIVGGYFLIRGV). The Cytoplasmic portion of the chain corresponds to 424-451 (MTLFSIKSNHPGLLSEKAASKINETMLR). A helical transmembrane segment spans residues 452-472 (LGIFGFLAFGFVLITFSCHFY). The Extracellular segment spans residues 473 to 524 (DFFNQAEWERSFRDYVLCQANVTIGLPTKQPIPDCEIKNRPSLLVEKINLFA). Cysteine 490 and cysteine 507 are oxidised to a cystine. The helical transmembrane segment at 525–545 (MFGTGIAMSTWVWTKATLLIW) threads the bilayer. An interaction with BBS5 and BBS7 region spans residues 538 to 569 (TKATLLIWRRTWCRLTGQSDDEPKRIKKSKMI). At 546-787 (RRTWCRLTGQ…TELMDADSDF (242 aa)) the chain is on the cytoplasmic side. 3 positions are modified to phosphoserine: serine 556, serine 574, and serine 590. The segment at 570–653 (AKAFSKRHEL…TPVPPEEQAN (84 aa)) is required for interaction with PRKACA. Residues 581–593 (QNPGQELSFSMHT) are interaction with DLG5. Position 593 is a phosphothreonine (threonine 593). Phosphoserine occurs at positions 595 and 638. Phosphothreonine is present on residues threonine 640 and threonine 644. The residue at position 662 (serine 662) is a Phosphoserine. The segment at 667–704 (KRLGRKKKRRKRKKEVCPLAPPPELHPPAPAPSTIPRL) is disordered. The span at 668–680 (RLGRKKKRRKRKK) shows a compositional bias: basic residues. The span at 685-699 (LAPPPELHPPAPAPS) shows a compositional bias: pro residues.

Belongs to the G-protein coupled receptor Fz/Smo family. As to quaternary structure, homodimer. Interacts (via C-terminus) with protein kinase A catalytic subunit PRKACA; interacts with free PRKACA subunits and the interaction leads to sequestration of PRKACA at the membrane, preventing PRKACA-mediated phosphorylation of GLI transcription factors. Interacts with ARRB2. Interacts with KIF7. Interacts with BBS5 and BBS7; the interactions are indicative for the association of SMO with the BBsome complex to facilitate ciliary localization of SMO. Interacts with DLG5 and SDCBP. Interacts with GAS8/DRC4. In terms of processing, phosphorylation by GRK kinases is required for interaction with protein kinase A catalytic subunit PRKACA.

Its subcellular location is the cell membrane. The protein localises to the cell projection. It localises to the cilium. G protein-coupled receptor which associates with the patched protein (PTCH) to transduce hedgehog protein signaling. Binding of sonic hedgehog (SHH) to its receptor patched prevents inhibition of smoothened (SMO) by patched. When active, SMO binds to and sequesters protein kinase A catalytic subunit PRKACA at the cell membrane, preventing PRKACA-mediated phosphorylation of GLI transcription factors which releases the GLI proteins from PRKACA-mediated inhibition and allows for transcriptional activation of hedgehog pathway target genes. Required for the accumulation of KIF7, GLI2 and GLI3 in the cilia. Interacts with DLG5 at the ciliary base to induce the accumulation of KIF7 and GLI2 at the ciliary tip for GLI2 activation. The sequence is that of Protein smoothened (SMO) from Homo sapiens (Human).